An 83-amino-acid chain; its full sequence is Small ribosomal subunit protein bS16 (83 aa).

It belongs to the bacterial ribosomal protein bS16 family.

This Chromobacterium violaceum (strain ATCC 12472 / DSM 30191 / JCM 1249 / CCUG 213 / NBRC 12614 / NCIMB 9131 / NCTC 9757 / MK) protein is Small ribosomal subunit protein bS16.